The following is a 529-amino-acid chain: uncharacterized protein (529 aa).

Residues 13–129 (QTAMRKMRAL…LSTLCQEAQR (117 aa)) enclose the Arf-GAP domain. The segment at 28-51 (CFDCGARNPTWCTVTYGVFLCIDC) adopts a C4-type zinc-finger fold. Basic and acidic residues predominate over residues 291–301 (QMEAKVAKDPT). Disordered regions lie at residues 291-313 (QMEA…GMGG), 335-357 (VLTF…DDKY), 398-424 (KSRY…GASP), and 468-493 (FGSE…SDLK). Low complexity predominate over residues 399 to 420 (SRYTASSSSSSTSRAPTTRLTA). Residues 476 to 487 (NGSQQRQSSQVP) are compositionally biased toward polar residues.

In terms of biological role, GTPase-activating protein for the ADP ribosylation factor family. This is an uncharacterized protein from Caenorhabditis elegans.